The following is a 64-amino-acid chain: MALALLGLTIKPEHVPEGTGKAVADVEALACDPAQCMRSCPFNPFLNQYGGICKNGQCVCVKPS.

Expressed in fat body, but not in cephalothorax, silk gland, midgut.

Functionally, insecticidal toxin. In Araneus ventricosus (Orbweaver spider), this protein is U2-aranetoxin-Av1a.